We begin with the raw amino-acid sequence, 409 residues long: Failed axon connections homolog (409 aa).

The chain crosses the membrane as a helical span at residues 68-88; sequence YLTGGALLAAAAYLLHELLVI. The segment at 372–409 is disordered; that stretch reads DEGAENSFSRTPDTDFTGHSLFDSDVDMDDYTEHEQCK.

It belongs to the FAX family.

The protein localises to the membrane. In terms of biological role, may play a role in axonal development. The sequence is that of Failed axon connections homolog (Faxc) from Rattus norvegicus (Rat).